Here is a 713-residue protein sequence, read N- to C-terminus: Polyribonucleotide nucleotidyltransferase (713 aa).

Residues aspartate 493 and aspartate 499 each coordinate Mg(2+). Residues 560-619 enclose the KH domain; the sequence is PRMITIKINPEKIRDVIGKGGSVIRALTEETGTTIDISDDGVVTIASTNSEGMAEAKKRI. An S1 motif domain is found at 629-697; the sequence is GHVYEGTVLK…EKGRVRLSAK (69 aa).

This sequence belongs to the polyribonucleotide nucleotidyltransferase family. The cofactor is Mg(2+).

The protein resides in the cytoplasm. The catalysed reaction is RNA(n+1) + phosphate = RNA(n) + a ribonucleoside 5'-diphosphate. Functionally, involved in mRNA degradation. Catalyzes the phosphorolysis of single-stranded polyribonucleotides processively in the 3'- to 5'-direction. This Burkholderia pseudomallei (strain 1106a) protein is Polyribonucleotide nucleotidyltransferase.